The primary structure comprises 174 residues: ATP synthase subunit delta, sodium ion specific (174 aa).

It belongs to the ATPase delta chain family. As to quaternary structure, F-type ATPases have 2 components, F(1) - the catalytic core - and F(0) - the membrane proton channel. F(1) has five subunits: alpha(3), beta(3), gamma(1), delta(1), epsilon(1). F(0) has three main subunits: a(1), b(2) and c(10-14). The alpha and beta chains form an alternating ring which encloses part of the gamma chain. F(1) is attached to F(0) by a central stalk formed by the gamma and epsilon chains, while a peripheral stalk is formed by the delta and b chains.

The protein resides in the cell inner membrane. F(1)F(0) ATP synthase produces ATP from ADP in the presence of a proton or sodium gradient. F-type ATPases consist of two structural domains, F(1) containing the extramembraneous catalytic core and F(0) containing the membrane proton channel, linked together by a central stalk and a peripheral stalk. During catalysis, ATP synthesis in the catalytic domain of F(1) is coupled via a rotary mechanism of the central stalk subunits to proton translocation. Functionally, this protein is part of the stalk that links CF(0) to CF(1). It either transmits conformational changes from CF(0) to CF(1) or is implicated in proton conduction. This is ATP synthase subunit delta, sodium ion specific from Ilyobacter tartaricus.